Reading from the N-terminus, the 342-residue chain is Inositol-tetrakisphosphate 1-kinase 1 (342 aa).

Residues Lys-28 and Lys-70 each contribute to the 1D-myo-inositol 6-phosphate site. ATP contacts are provided by Arg-105 and Lys-155. The region spanning 116-332 is the ATP-grasp domain; the sequence is DHAADQDSTF…HKDGVGNQQE (217 aa). Residues Gly-161 and His-166 each coordinate 1D-myo-inositol 6-phosphate. His-166, Gln-187, and Val-190 together coordinate ATP. Lys-198 and Tyr-200 together coordinate 1D-myo-inositol 6-phosphate. An ATP-binding site is contributed by Ser-213. Residues 219 to 247 form a catalytic specificity elements (CSE) region; it reads PEDDASAQGSVSFSQVSNLPTERTAEEYY. Asn-280 is a binding site for 1D-myo-inositol 6-phosphate. Asp-282 provides a ligand contact to Mg(2+). ATP-binding residues include Ile-296, Asp-297, and Asn-299. The Mg(2+) site is built by Asp-297 and Asn-299. 3 residues coordinate 1D-myo-inositol 6-phosphate: Asn-299, Gly-303, and Lys-306.

It belongs to the ITPK1 family. Monomer. The cofactor is Mg(2+). As to expression, expressed in the embryo of 15 day after pollination. Expressed in kernels at earlier stages but at very low levels. Expression in the embryo peaks at 15 days after pollination and then declines. No expression is detected from endosperm and vegetative tissues.

It catalyses the reaction 1D-myo-inositol 3,4,5,6-tetrakisphosphate + ATP = 1D-myo-inositol 1,3,4,5,6-pentakisphosphate + ADP + H(+). The enzyme catalyses 1D-myo-inositol 1,3,4-trisphosphate + ATP = 1D-myo-inositol 1,3,4,5-tetrakisphosphate + ADP + H(+). The catalysed reaction is 1D-myo-inositol 1,3,4-trisphosphate + ATP = 1D-myo-inositol 1,3,4,6-tetrakisphosphate + ADP + H(+). It carries out the reaction 1D-myo-inositol 1,2,3,4,5-pentakisphosphate + ATP = 3-diphospho-1D-myo-inositol 1,2,4,5-tetrakisphosphate + ADP. It catalyses the reaction 1D-myo-inositol hexakisphosphate + ATP = 5-diphospho-1D-myo-inositol 1,2,3,4,6-pentakisphosphate + ADP. Kinase that can phosphorylate various inositol polyphosphate such as Ins(3,4,5,6)P4 or Ins(1,3,4)P3 and participates in phytic acid biosynthesis in developing seeds. Phosphorylates Ins(3,4,5,6)P4 at position 1 to form Ins(1,3,4,5,6)P5. This reaction is thought to have regulatory importance, since Ins(3,4,5,6)P4 is an inhibitor of plasma membrane Ca(2+)-activated Cl(-) channels, while Ins(1,3,4,5,6)P5 is not. Also phosphorylates Ins(1,3,4)P3 on O-5 and O-6 to form Ins(1,3,4,6)P4, an essential molecule in the hexakisphosphate (InsP6) pathway. Also able to phosphorylate Ins(3,5,6)P3 but not Ins(1,4,5)P3, Ins(2,4,5)P3, Ins(1,3,4,6)P4 nor Ins(1,3,5,6)P4. Has higher specific activity on Ins(3,4,5,6)P4 than Ins(1,3,4)P3 and Ins(3,5,6)P3. Can also could use Ins(1,2,5,6)P4 as a substrate. Able to add a beta-phosphate to the 3 positions of Ins(1,2,3,4,5)P5 and to add beta-phosphate to InsP6 to yield 5-InsP7, thus exhibiting InsP6 kinase activity. Also has Ins(1,3,4,5,6)P5 phosphatase activity. The sequence is that of Inositol-tetrakisphosphate 1-kinase 1 from Zea mays (Maize).